Consider the following 192-residue polypeptide: Hydrogenase expression/formation protein HupD (192 aa).

Ni(2+) is bound by residues E23, D69, and H100.

Belongs to the peptidase A31 family.

Its function is as follows. Not known. Could be involved in the processing of hydrogenase. The protein is Hydrogenase expression/formation protein HupD (hupD) of Bradyrhizobium diazoefficiens (strain JCM 10833 / BCRC 13528 / IAM 13628 / NBRC 14792 / USDA 110).